The chain runs to 135 residues: Ribosome-binding factor A (135 aa).

Belongs to the RbfA family. Monomer. Binds 30S ribosomal subunits, but not 50S ribosomal subunits or 70S ribosomes.

The protein localises to the cytoplasm. Functionally, one of several proteins that assist in the late maturation steps of the functional core of the 30S ribosomal subunit. Associates with free 30S ribosomal subunits (but not with 30S subunits that are part of 70S ribosomes or polysomes). Required for efficient processing of 16S rRNA. May interact with the 5'-terminal helix region of 16S rRNA. In Methylobacterium nodulans (strain LMG 21967 / CNCM I-2342 / ORS 2060), this protein is Ribosome-binding factor A.